A 1227-amino-acid polypeptide reads, in one-letter code: DNA-directed RNA polymerase subunit beta (1227 aa).

This sequence belongs to the RNA polymerase beta chain family. The RNAP catalytic core consists of 2 alpha, 1 beta, 1 beta' and 1 omega subunit. When a sigma factor is associated with the core the holoenzyme is formed, which can initiate transcription.

The catalysed reaction is RNA(n) + a ribonucleoside 5'-triphosphate = RNA(n+1) + diphosphate. Its function is as follows. DNA-dependent RNA polymerase catalyzes the transcription of DNA into RNA using the four ribonucleoside triphosphates as substrates. The polypeptide is DNA-directed RNA polymerase subunit beta (Chloroflexus aurantiacus (strain ATCC 29366 / DSM 635 / J-10-fl)).